The primary structure comprises 475 residues: UDP-N-acetylmuramate--L-alanine ligase (475 aa).

Residue 125 to 131 (GTHGKTT) participates in ATP binding.

It belongs to the MurCDEF family.

It localises to the cytoplasm. It catalyses the reaction UDP-N-acetyl-alpha-D-muramate + L-alanine + ATP = UDP-N-acetyl-alpha-D-muramoyl-L-alanine + ADP + phosphate + H(+). It participates in cell wall biogenesis; peptidoglycan biosynthesis. Cell wall formation. The sequence is that of UDP-N-acetylmuramate--L-alanine ligase from Actinobacillus pleuropneumoniae serotype 7 (strain AP76).